The sequence spans 461 residues: Vitamin K-dependent protein C (461 aa).

A signal peptide spans 1-18; that stretch reads MWQLTSLLLFVATWGISG. An O-linked (GalNAc...) threonine glycan is attached at threonine 19. Positions 19 to 42 are excised as a propeptide; the sequence is TPAPLDSVFSSSERAHQVLRIRKR. In terms of domain architecture, Gla spans 43–88; it reads ANSFLEELRHSSLERECIEEICDFEEAKEIFQNVDDTLAFWSKHVD. A 4-carboxyglutamate mark is found at glutamate 48, glutamate 49, glutamate 56, glutamate 58, glutamate 61, glutamate 62, glutamate 67, glutamate 68, and glutamate 71. Cysteine 59 and cysteine 64 are disulfide-bonded. 4 cysteine pairs are disulfide-bonded: cysteine 92-cysteine 111, cysteine 101-cysteine 106, cysteine 105-cysteine 120, and cysteine 122-cysteine 131. EGF-like domains lie at 97–132 and 136–176; these read LEHP…RFCQ and SFLN…LQCH. At aspartate 113 the chain carries (3R)-3-hydroxyaspartate. Residue asparagine 139 is glycosylated (N-linked (GlcNAc...) asparagine). 5 disulfide bridges follow: cysteine 140/cysteine 151, cysteine 147/cysteine 160, cysteine 162/cysteine 175, cysteine 183/cysteine 319, and cysteine 238/cysteine 254. Positions 212 to 450 constitute a Peptidase S1 domain; sequence LIDGKMTRRG…YLDWIHGHIR (239 aa). Catalysis depends on histidine 253, which acts as the Charge relay system. N-linked (GlcNAc...) asparagine glycosylation is present at asparagine 290. The active-site Charge relay system is aspartate 299. Serine 347 bears the Phosphoserine; by FAM20C mark. N-linked (GlcNAc...) asparagine glycosylation is present at asparagine 355. An N-linked (GlcNAc...) asparagine; atypical; partial glycan is attached at asparagine 371. Disulfide bonds link cysteine 373–cysteine 387 and cysteine 398–cysteine 426. Catalysis depends on serine 402, which acts as the Charge relay system.

Belongs to the peptidase S1 family. In terms of assembly, synthesized as a single chain precursor, which is cleaved into a light chain and a heavy chain held together by a disulfide bond. The enzyme is then activated by thrombin, which cleaves a tetradecapeptide from the amino end of the heavy chain; this reaction, which occurs at the surface of endothelial cells, is strongly promoted by thrombomodulin. Interacts (activated) with iripin-8, a serine protease inhibitor from Ixodes ricinus saliva. In terms of processing, the vitamin K-dependent, enzymatic carboxylation of some Glu residues allows the modified protein to bind calcium. N- and O-glycosylated. Partial (70%) N-glycosylation of Asn-371 with an atypical N-X-C site produces a higher molecular weight form referred to as alpha. The lower molecular weight form, not N-glycosylated at Asn-371, is beta. O-glycosylated with core 1 or possibly core 8 glycans. Post-translationally, the iron and 2-oxoglutarate dependent 3-hydroxylation of aspartate and asparagine is (R) stereospecific within EGF domains. In terms of processing, may be phosphorylated on a Ser or Thr in a region (AA 25-30) of the propeptide. In terms of tissue distribution, plasma; synthesized in the liver.

The protein localises to the secreted. The protein resides in the golgi apparatus. It is found in the endoplasmic reticulum. The catalysed reaction is Degradation of blood coagulation factors Va and VIIIa.. In terms of biological role, protein C is a vitamin K-dependent serine protease that regulates blood coagulation by inactivating factors Va and VIIIa in the presence of calcium ions and phospholipids. Exerts a protective effect on the endothelial cell barrier function. This is Vitamin K-dependent protein C (PROC) from Homo sapiens (Human).